The following is a 557-amino-acid chain: Probable phenylalanine--tRNA ligase beta subunit (557 aa).

The region spanning 276 to 352 is the B5 domain; sequence MHNRSYVMGL…IAHGFNNFRR (77 aa). Mg(2+) contacts are provided by aspartate 330, aspartate 336, glutamate 339, and aspartate 340.

This sequence belongs to the phenylalanyl-tRNA synthetase beta subunit family. Type 2 subfamily. As to quaternary structure, tetramer of two alpha and two beta subunits. It depends on Mg(2+) as a cofactor.

It localises to the cytoplasm. The catalysed reaction is tRNA(Phe) + L-phenylalanine + ATP = L-phenylalanyl-tRNA(Phe) + AMP + diphosphate + H(+). This chain is Probable phenylalanine--tRNA ligase beta subunit, found in Encephalitozoon cuniculi (strain GB-M1) (Microsporidian parasite).